Here is a 364-residue protein sequence, read N- to C-terminus: tRNA 2-selenouridine synthase (364 aa).

One can recognise a Rhodanese domain in the interval 14–137; the sequence is LIADTPIIDV…LRQTTIQATI (124 aa). Residue cysteine 97 is the S-selanylcysteine intermediate of the active site.

This sequence belongs to the SelU family. In terms of assembly, monomer.

It catalyses the reaction 5-methylaminomethyl-2-thiouridine(34) in tRNA + selenophosphate + (2E)-geranyl diphosphate + H2O + H(+) = 5-methylaminomethyl-2-selenouridine(34) in tRNA + (2E)-thiogeraniol + phosphate + diphosphate. The enzyme catalyses 5-methylaminomethyl-2-thiouridine(34) in tRNA + (2E)-geranyl diphosphate = 5-methylaminomethyl-S-(2E)-geranyl-thiouridine(34) in tRNA + diphosphate. The catalysed reaction is 5-methylaminomethyl-S-(2E)-geranyl-thiouridine(34) in tRNA + selenophosphate + H(+) = 5-methylaminomethyl-2-(Se-phospho)selenouridine(34) in tRNA + (2E)-thiogeraniol. It carries out the reaction 5-methylaminomethyl-2-(Se-phospho)selenouridine(34) in tRNA + H2O = 5-methylaminomethyl-2-selenouridine(34) in tRNA + phosphate. Its function is as follows. Involved in the post-transcriptional modification of the uridine at the wobble position (U34) of tRNA(Lys), tRNA(Glu) and tRNA(Gln). Catalyzes the conversion of 2-thiouridine (S2U-RNA) to 2-selenouridine (Se2U-RNA). Acts in a two-step process involving geranylation of 2-thiouridine (S2U) to S-geranyl-2-thiouridine (geS2U) and subsequent selenation of the latter derivative to 2-selenouridine (Se2U) in the tRNA chain. In Escherichia coli O139:H28 (strain E24377A / ETEC), this protein is tRNA 2-selenouridine synthase.